A 151-amino-acid polypeptide reads, in one-letter code: D-aminoacyl-tRNA deacylase (151 aa).

The short motif at 137–138 (GP) is the Gly-cisPro motif, important for rejection of L-amino acids element.

This sequence belongs to the DTD family. In terms of assembly, homodimer.

It localises to the cytoplasm. The catalysed reaction is glycyl-tRNA(Ala) + H2O = tRNA(Ala) + glycine + H(+). It carries out the reaction a D-aminoacyl-tRNA + H2O = a tRNA + a D-alpha-amino acid + H(+). An aminoacyl-tRNA editing enzyme that deacylates mischarged D-aminoacyl-tRNAs. Also deacylates mischarged glycyl-tRNA(Ala), protecting cells against glycine mischarging by AlaRS. Acts via tRNA-based rather than protein-based catalysis; rejects L-amino acids rather than detecting D-amino acids in the active site. By recycling D-aminoacyl-tRNA to D-amino acids and free tRNA molecules, this enzyme counteracts the toxicity associated with the formation of D-aminoacyl-tRNA entities in vivo and helps enforce protein L-homochirality. This Fusobacterium nucleatum subsp. nucleatum (strain ATCC 25586 / DSM 15643 / BCRC 10681 / CIP 101130 / JCM 8532 / KCTC 2640 / LMG 13131 / VPI 4355) protein is D-aminoacyl-tRNA deacylase.